Here is a 348-residue protein sequence, read N- to C-terminus: Phosphate acyltransferase (348 aa).

The protein belongs to the PlsX family. As to quaternary structure, homodimer. Probably interacts with PlsY.

It localises to the cytoplasm. The enzyme catalyses a fatty acyl-[ACP] + phosphate = an acyl phosphate + holo-[ACP]. Its pathway is lipid metabolism; phospholipid metabolism. Catalyzes the reversible formation of acyl-phosphate (acyl-PO(4)) from acyl-[acyl-carrier-protein] (acyl-ACP). This enzyme utilizes acyl-ACP as fatty acyl donor, but not acyl-CoA. The sequence is that of Phosphate acyltransferase from Rhizobium leguminosarum bv. trifolii (strain WSM2304).